A 419-amino-acid polypeptide reads, in one-letter code: UDP-N-acetylglucosamine 1-carboxyvinyltransferase (419 aa).

22–23 is a binding site for phosphoenolpyruvate; that stretch reads KN. Arg-93 is a UDP-N-acetyl-alpha-D-glucosamine binding site. Cys-117 serves as the catalytic Proton donor. Cys-117 bears the 2-(S-cysteinyl)pyruvic acid O-phosphothioketal mark. Asp-307 and Ile-329 together coordinate UDP-N-acetyl-alpha-D-glucosamine.

It belongs to the EPSP synthase family. MurA subfamily.

It localises to the cytoplasm. It carries out the reaction phosphoenolpyruvate + UDP-N-acetyl-alpha-D-glucosamine = UDP-N-acetyl-3-O-(1-carboxyvinyl)-alpha-D-glucosamine + phosphate. It functions in the pathway cell wall biogenesis; peptidoglycan biosynthesis. Its function is as follows. Cell wall formation. Adds enolpyruvyl to UDP-N-acetylglucosamine. This chain is UDP-N-acetylglucosamine 1-carboxyvinyltransferase, found in Shewanella sp. (strain MR-7).